A 217-amino-acid polypeptide reads, in one-letter code: Large ribosomal subunit protein uL4 (217 aa).

The disordered stretch occupies residues lysine 46–arginine 102.

The protein belongs to the universal ribosomal protein uL4 family. As to quaternary structure, part of the 50S ribosomal subunit.

In terms of biological role, one of the primary rRNA binding proteins, this protein initially binds near the 5'-end of the 23S rRNA. It is important during the early stages of 50S assembly. It makes multiple contacts with different domains of the 23S rRNA in the assembled 50S subunit and ribosome. Functionally, forms part of the polypeptide exit tunnel. This Corynebacterium diphtheriae (strain ATCC 700971 / NCTC 13129 / Biotype gravis) protein is Large ribosomal subunit protein uL4.